A 159-amino-acid chain; its full sequence is Ribosomal RNA large subunit methyltransferase H (159 aa).

S-adenosyl-L-methionine is bound by residues Leu76, Gly108, and 127 to 132; that span reads FSKMTF.

It belongs to the RNA methyltransferase RlmH family. Homodimer.

It is found in the cytoplasm. It carries out the reaction pseudouridine(1915) in 23S rRNA + S-adenosyl-L-methionine = N(3)-methylpseudouridine(1915) in 23S rRNA + S-adenosyl-L-homocysteine + H(+). In terms of biological role, specifically methylates the pseudouridine at position 1915 (m3Psi1915) in 23S rRNA. The chain is Ribosomal RNA large subunit methyltransferase H from Bacillus velezensis (strain DSM 23117 / BGSC 10A6 / LMG 26770 / FZB42) (Bacillus amyloliquefaciens subsp. plantarum).